A 430-amino-acid chain; its full sequence is Spermatogenic leucine zipper protein 1 (430 aa).

Residues 1–25 form a disordered region; that stretch reads MASSAKSAEMPTISKTVNPTPDPHQ. Residues 62-102 adopt a coiled-coil conformation; sequence EQQTAQKFNNLLKEIKDILKNMAGFEEKITEAKELFEETNI. Serine 107 carries the post-translational modification Phosphoserine. Residues 166 to 177 form a helix-loop-helix motif region; it reads KINEMLSTNLPV. The tract at residues 178 to 244 is basic motif; it reads SLAPEKEDNE…NVQEETMKIR (67 aa). Coiled coils occupy residues 214–269 and 316–351; these read LEEK…KLIK and SLQL…TLQE. Serine 258 carries the post-translational modification Phosphoserine. Positions 303-324 are leucine-zipper; sequence LEEQVKKLSHDTYSLQLMAALL.

In terms of assembly, interacts with PPP1CC isoform gamma-2. Post-translationally, phosphorylated by MAPK1/ERK2 and MAPK3/ERK1. In terms of tissue distribution, specifically and strongly expressed in the testis. Expressed in several tumor cell lines.

It localises to the cytoplasm. It is found in the nucleus. Transcription factor that binds to the DNA sequence 5'-CANNTG-3'(E box) and the G-box motif. May play an important role in the regulation of cell proliferation and differentiation during spermatogenesis. This Homo sapiens (Human) protein is Spermatogenic leucine zipper protein 1 (SPZ1).